Consider the following 1082-residue polypeptide: Neisserial autotransporter lipoprotein NalP (1082 aa).

Residues 1-27 (MRTTPTFPTKTFKPTAMALAVATTLSA) form the signal peptide. Cys-28 carries N-palmitoyl cysteine lipidation. Cys-28 carries the S-diacylglycerol cysteine lipid modification. The Peptidase S8 domain occupies 110-482 (NDAYKNLINL…WGLLDAGKAM (373 aa)). Catalysis depends on charge relay system residues Asp-138, His-210, and Ser-426. The 275-residue stretch at 808 to 1082 (DGLDHNGTGL…SGRVGVGYRF (275 aa)) folds into the Autotransporter domain.

This sequence belongs to the peptidase S8 family. Post-translationally, probably auto-processes to yield a 68-70 kDa form and a C-terminal 30 kDa translocator domain; upon overexpression in situ and in E.coli full-length protein is seen as well as (probably) auto-processed forms of 68-70 kDa and 30 kDa in size, suggesting this may have protease activity.

The protein localises to the cell outer membrane. The protein resides in the cell surface. It is found in the secreted. Its subcellular location is the host cytoplasm. It localises to the host perinuclear region. Cleavage of host complement factor C3 is inhibited by PMSF. In terms of biological role, major human immunogenic protein, detected in patients recovering from meningitidis. Autotransporter with a secreted protease domain involved in processing other autotransporter proteins including App, IgA, LbpB and NHBA. Probably autoprocesses to release the about 70 kDa passenger domain. Both cell surface protein (Neisserial autotransporter lipoprotein NalP) and the passenger domain cleave human (host) complement factor C3, generating a shorter alpha chain and a longer beta chain than normal. Uptake of a passenger domain fragment (residues 101-784) by human cells increases cell metabolic activity; the serine protease activity is required for this increase. Its function is as follows. Cleaves human (host) complement factor C3, generating a shorter alpha chain and a longer beta chain than normal. Does not act on mouse or rabbit C3. Cleavage causes C3b degradation by human CFI and CFH, and thus decreases deposition of C3b on the bacteria surface and probably facilitates complement escape. Functionally, plays a role in extracellular-DNA (eDNA) mediated biofilm formation. In some strains (including cc32 strain MC58) eDNA stimulates biofilm formation. When NalP is not expressed (and no longer processes NHBA or IgA) biofilm formation increases. This Neisseria meningitidis serogroup B (strain ATCC BAA-335 / MC58) protein is Neisserial autotransporter lipoprotein NalP.